The chain runs to 370 residues: MADIQNISLDSPGSVGAVAVPVVFALIFLLGMVGNGLVLAVLLQPGPSAWQEPGSTTDLFILNLAVADLCFILCCVPFQAAIYTLDAWLFGAFVCKTVHLLIYLTMYASSFTLAAVSVDRYLAVRHPLRSRALRTPRNARAAVGLVWLLAALFSAPYLSYYGTVRYGALELCVPAWEDARRRALDVATFAAGYLLPVTVVSLAYGRTLCFLWAAVGPAGAAAAEARRRATGRAGRAMLTVAALYALCWGPHHALILCFWYGRFAFSPATYACRLASHCLAYANSCLNPLVYSLASRHFRARFRRLWPCGHRRHRHHHHRLHRALRRVQPASSGPAGYPGDARPRGWSMEPRGDALRGGETRLTLSARGPQ.

Residues 1–20 are Extracellular-facing; that stretch reads MADIQNISLDSPGSVGAVAV. N6 carries an N-linked (GlcNAc...) asparagine glycan. Residues 21-41 traverse the membrane as a helical segment; sequence PVVFALIFLLGMVGNGLVLAV. The Cytoplasmic portion of the chain corresponds to 42–57; that stretch reads LLQPGPSAWQEPGSTT. The chain crosses the membrane as a helical span at residues 58–78; it reads DLFILNLAVADLCFILCCVPF. Residues 79–96 are Extracellular-facing; it reads QAAIYTLDAWLFGAFVCK. A disulfide bridge links C95 with C172. Residues 97 to 118 form a helical membrane-spanning segment; it reads TVHLLIYLTMYASSFTLAAVSV. At 119 to 138 the chain is on the cytoplasmic side; it reads DRYLAVRHPLRSRALRTPRN. The helical transmembrane segment at 139–159 threads the bilayer; the sequence is ARAAVGLVWLLAALFSAPYLS. Residues 160-184 lie on the Extracellular side of the membrane; that stretch reads YYGTVRYGALELCVPAWEDARRRAL. The helical transmembrane segment at 185–205 threads the bilayer; that stretch reads DVATFAAGYLLPVTVVSLAYG. The Cytoplasmic segment spans residues 206–236; that stretch reads RTLCFLWAAVGPAGAAAAEARRRATGRAGRA. A helical membrane pass occupies residues 237 to 257; sequence MLTVAALYALCWGPHHALILC. Over 258 to 259 the chain is Extracellular; that stretch reads FW. A helical transmembrane segment spans residues 260 to 280; sequence YGRFAFSPATYACRLASHCLA. Topologically, residues 281–370 are cytoplasmic; that stretch reads YANSCLNPLV…RLTLSARGPQ (90 aa). C308 carries the S-palmitoyl cysteine lipid modification. Residues 328 to 370 form a disordered region; it reads QPASSGPAGYPGDARPRGWSMEPRGDALRGGETRLTLSARGPQ. Positions 350–359 are enriched in basic and acidic residues; sequence PRGDALRGGE.

The protein belongs to the G-protein coupled receptor 1 family.

It is found in the cell membrane. Its function is as follows. Receptor for the hormone galanin and spexin-1. The chain is Galanin receptor type 3 (Galr3) from Mus musculus (Mouse).